Reading from the N-terminus, the 94-residue chain is Lipoate-protein ligase A subunit 2 (94 aa).

Heterodimer composed of LplA and LplB.

The catalysed reaction is L-lysyl-[lipoyl-carrier protein] + (R)-lipoate + ATP = N(6)-[(R)-lipoyl]-L-lysyl-[lipoyl-carrier protein] + AMP + diphosphate + H(+). Its pathway is protein modification; protein lipoylation via exogenous pathway; protein N(6)-(lipoyl)lysine from lipoate: step 1/2. The protein operates within protein modification; protein lipoylation via exogenous pathway; protein N(6)-(lipoyl)lysine from lipoate: step 2/2. Its function is as follows. Part of a lipoate-protein ligase complex that catalyzes both the ATP-dependent activation of exogenously supplied lipoate to lipoyl-AMP and the transfer of the activated lipoyl onto the lipoyl domains of lipoate-dependent enzymes. Can also use octanoate as substrate. This Thermoplasma acidophilum (strain ATCC 25905 / DSM 1728 / JCM 9062 / NBRC 15155 / AMRC-C165) protein is Lipoate-protein ligase A subunit 2 (lplB).